A 350-amino-acid chain; its full sequence is Protein-arginine kinase (350 aa).

In terms of domain architecture, Phosphagen kinase C-terminal spans I21–A253. Residues S24–R28, H90, R124, R175–M179, and R206–E211 each bind ATP. The short motif at R336–A341 is the RDXXRA motif of the pArg binding pocket involved in allosteric regulation element.

This sequence belongs to the ATP:guanido phosphotransferase family.

The catalysed reaction is L-arginyl-[protein] + ATP = N(omega)-phospho-L-arginyl-[protein] + ADP + H(+). Appears to be allosterically activated by the binding of pArg-containing polypeptides to the pArg-binding pocket localized in the C-terminal domain of McsB. Catalyzes the specific phosphorylation of arginine residues in proteins. In Moorella thermoacetica (strain ATCC 39073 / JCM 9320), this protein is Protein-arginine kinase.